Consider the following 391-residue polypeptide: Oocyte zinc finger protein XlCOF7.2 (391 aa).

C2H2-type zinc fingers lie at residues 284 to 306 (FPCS…YRTH), 312 to 334 (YPCS…RRIH), 340 to 362 (SSCS…HRTH), and 368 to 391 (YSCS…RRTH).

The protein belongs to the krueppel C2H2-type zinc-finger protein family.

The protein resides in the nucleus. In terms of biological role, may be involved in transcriptional regulation. The polypeptide is Oocyte zinc finger protein XlCOF7.2 (Xenopus laevis (African clawed frog)).